A 163-amino-acid chain; its full sequence is Retinoic acid receptor responder protein 2 (163 aa).

An N-terminal signal peptide occupies residues 1-20 (MRRLLIPLALWLGAVGVGVA). Disulfide bonds link C77–C87, C98–C117, and C101–C135. Positions 158–163 (KALPRS) are excised as a propeptide.

Post-translationally, secreted in an inactive precursor form, prochemerin, which is proteolytically processed by a variety of extracellular proteases to generate forms with differing levels of bioactivity. For example, the removal of six amino acids results in chemerin-157, which exhibits the highest activity, while removal of seven amino acids results in chemerin-156 which has slightly less activity. Some proteases are able to cleave at more than one site and chemerin forms may be sequentially processed by different enzymes to modulate activity levels. The coordinated expression and activity of chemerin-modifying enzymes is essential for regulating its bioactivation, inactivation and, consequently, biological function. Cathepsin G cleaves seven C-terminal amino acids from prochemerin (chemerin-156), elastase is able to cleave six (chemerin-157), eight (chemerin-155) or eleven (chemerin-152), plasmin cleaves five amino acids (chemerin-158), and tryptase cleaves five (chemerin-158) or eight (chemerin-155). Multiple cleavages might be required to fully activate chemerin, with an initial tryptase cleavage resulting in chemerin with low activity (chemerin-158), and a second cleavage by carboxypeptidase N or B producing highly active chemerin (chemerin-157). In terms of tissue distribution, expressed at the highest levels in placenta, liver, and white adipose tissue (WAT), and to a lesser extent in many other tissues such as lung, brown adipose tissue, heart, ovary, kidney, skeletal muscle and pancreas. Within WAT, expression is enriched in adipocytes as compared to the stromal vascular fraction. Expression and secretion increases dramatically with adipogenesis. Highly expressed in skin (basal and suprabasal layers of the epidermis, hair follicles and endothelial cells). Expression is elevated in numerous metabolic and inflammatory diseases including psoriasis, obesity, type 2 diabetes, metabolic syndrome and cardiovascular disease.

The protein localises to the secreted. Functionally, adipocyte-secreted protein (adipokine) that regulates adipogenesis, metabolism and inflammation through activation of the chemokine-like receptor 1 (CMKLR1). Also acts as a ligand for CMKLR2. Can also bind to C-C chemokine receptor-like 2 (CCRL2), but with a lower affinity than it does to CMKLR1 or CMKLR2. Positively regulates adipocyte differentiation, modulates the expression of adipocyte genes involved in lipid and glucose metabolism and might play a role in angiogenesis, a process essential for the expansion of white adipose tissue. Also acts as a pro-inflammatory adipokine, causing an increase in secretion of pro-inflammatory and prodiabetic adipokines, which further impair adipose tissue metabolic function and have negative systemic effects including impaired insulin sensitivity, altered glucose and lipid metabolism, and a decrease in vascular function in other tissues. Can have both pro- and anti-inflammatory properties depending on the modality of enzymatic cleavage by different classes of proteases. Acts as a chemotactic factor for leukocyte populations expressing CMKLR1, particularly immature plasmacytoid dendritic cells, but also immature myeloid DCs, macrophages and natural killer cells. Exerts an anti-inflammatory role by preventing TNF/TNFA-induced VCAM1 expression and monocytes adhesion in vascular endothelial cells. The effect is mediated via inhibiting activation of NF-kappa-B and CRK/p38 through stimulation of AKT1/NOS3 signaling and nitric oxide production. Its dual role in inflammation and metabolism might provide a link between chronic inflammation and obesity, as well as obesity-related disorders such as type 2 diabetes and cardiovascular disease. Exhibits an antimicrobial function in the skin. The sequence is that of Retinoic acid receptor responder protein 2 (RARRES2) from Homo sapiens (Human).